We begin with the raw amino-acid sequence, 152 residues long: Urease accessory protein UreE (152 aa).

This sequence belongs to the UreE family.

The protein localises to the cytoplasm. In terms of biological role, involved in urease metallocenter assembly. Binds nickel. Probably functions as a nickel donor during metallocenter assembly. The protein is Urease accessory protein UreE of Citrobacter koseri (strain ATCC BAA-895 / CDC 4225-83 / SGSC4696).